A 536-amino-acid polypeptide reads, in one-letter code: Serine protease inhibitor 28Dc (536 aa).

The signal sequence occupies residues 1 to 16 (MWRLLLALLLVSSVCC). Asparagine 355 carries N-linked (GlcNAc...) asparagine glycosylation.

The protein belongs to the serpin family.

It localises to the secreted. Its function is as follows. Serine protease inhibitor which is required for pupal viability and plays an essential role in regulating the melanization reaction. Inhibits spontaneous melanization and appears to be involved in the melanization immune response to physical wounding in larvae and adults. Acts by negatively regulating the Hayan-phenoloxidase (PPO1) cascade in the hemolymph and possibly the trachea. May function by controlling the initial release of the activated form of PPO1, phenoloxidase (PO) and thus maintains PO availability for processes such as wound response and pigmentation. This Drosophila melanogaster (Fruit fly) protein is Serine protease inhibitor 28Dc.